We begin with the raw amino-acid sequence, 103 residues long: Putative protein YmfH (103 aa).

The segment at 1–34 (MVNAAQRTRVKVEADNRPSVDTHPPGVQPSPGTG) is disordered. Positions 10 to 20 (VKVEADNRPSV) are enriched in basic and acidic residues. 2 helical membrane-spanning segments follow: residues 42–62 (MLCV…TALF) and 73–93 (GLIT…CFVE).

It is found in the cell inner membrane. This Escherichia coli (strain K12) protein is Putative protein YmfH (ymfH).